Here is a 335-residue protein sequence, read N- to C-terminus: L-carnitine dehydrogenase (335 aa).

29–34 (GTGVIG) provides a ligand contact to NAD(+).

The protein belongs to the 3-hydroxyacyl-CoA dehydrogenase family. L-carnitine dehydrogenase subfamily. Homodimer.

It is found in the cytoplasm. The enzyme catalyses carnitine + NAD(+) = 3-dehydrocarnitine + NADH + H(+). It participates in amine and polyamine metabolism; carnitine metabolism. In terms of biological role, catalyzes the NAD(+)-dependent oxidation of L-carnitine to 3-dehydrocarnitine. The polypeptide is L-carnitine dehydrogenase (Streptomyces griseus subsp. griseus (strain JCM 4626 / CBS 651.72 / NBRC 13350 / KCC S-0626 / ISP 5235)).